We begin with the raw amino-acid sequence, 375 residues long: Acyl-coenzyme A diphosphatase NUDT19 (375 aa).

Residues Ala-15–Glu-263 form the Nudix hydrolase domain. Residues Leu-91–Gly-116 form a disordered region. A Nudix box motif is present at residues Gly-116 to Gly-137. Mg(2+)-binding residues include Glu-131 and Glu-135. The short motif at Ser-373–Leu-375 is the Microbody targeting signal element.

The protein belongs to the Nudix hydrolase family. As to quaternary structure, monomer. Mg(2+) serves as cofactor. The cofactor is Mn(2+).

It localises to the peroxisome. It carries out the reaction an acyl-CoA + H2O = an acyl-4'-phosphopantetheine + adenosine 3',5'-bisphosphate + 2 H(+). It catalyses the reaction CoA + H2O = (R)-4'-phosphopantetheine + adenosine 3',5'-bisphosphate + 2 H(+). The catalysed reaction is hexanoyl-CoA + H2O = hexanoyl-4'-phosphopantetheine + adenosine 3',5'-bisphosphate + 2 H(+). The enzyme catalyses octanoyl-CoA + H2O = S-octanoyl-4'-phosphopantetheine + adenosine 3',5'-bisphosphate + 2 H(+). It carries out the reaction butanoyl-CoA + H2O = S-butanoyl-4'-phosphopantetheine + adenosine 3',5'-bisphosphate + 2 H(+). It catalyses the reaction propanoyl-CoA + H2O = propanoyl-4'-phosphopantetheine + adenosine 3',5'-bisphosphate + 2 H(+). The catalysed reaction is malonyl-CoA + H2O = malonyl-4'-phosphopantetheine + adenosine 3',5'-bisphosphate + 2 H(+). The enzyme catalyses succinyl-CoA + H2O = succinyl-4'-phosphopantetheine + adenosine 3',5'-bisphosphate + 2 H(+). It carries out the reaction choloyl-CoA + H2O = S-choloyl-4'-phosphopantetheine + adenosine 3',5'-bisphosphate + 2 H(+). It catalyses the reaction 4,8-dimethylnonanoyl-CoA + H2O = S-(4,8-dimethylnonanoyl)-4'-phosphopantetheine + adenosine 3',5'-bisphosphate + 2 H(+). The catalysed reaction is (9Z,12Z,15Z)-octadecatrienoyl-CoA + H2O = S-(9Z,12Z,15Z-octadecatrienoyl)-4'-phosphopantetheine + adenosine 3',5'-bisphosphate + 2 H(+). The enzyme catalyses (9Z,12Z)-octadecadienoyl-CoA + H2O = S-(9Z,12Z-octadecadienoyl)-4'-phosphopantetheine + adenosine 3',5'-bisphosphate + 2 H(+). It carries out the reaction (9Z)-hexadecenoyl-CoA + H2O = S-(9Z-hexadecenoyl)-4'-phosphopantetheine + adenosine 3',5'-bisphosphate + 2 H(+). It catalyses the reaction (9Z)-tetradecenoyl-CoA + H2O = S-(9Z-tetradecenoyl)-4'-phosphopantetheine + adenosine 3',5'-bisphosphate + 2 H(+). The catalysed reaction is (6Z)-octenoyl-CoA + H2O = S-(6Z-octenoyl)-4'-phosphopantetheine + adenosine 3',5'-bisphosphate + 2 H(+). The enzyme catalyses hexadecanoyl-CoA + H2O = S-hexadecanoyl-4'-phosphopantetheine + adenosine 3',5'-bisphosphate + 2 H(+). It carries out the reaction tetradecanoyl-CoA + H2O = tetradecanoyl-4'-phosphopantetheine + adenosine 3',5'-bisphosphate + 2 H(+). It catalyses the reaction dodecanoyl-CoA + H2O = S-dodecanoyl-4'-phosphopantetheine + adenosine 3',5'-bisphosphate + 2 H(+). The catalysed reaction is a 5'-end CoA-ribonucleoside in mRNA + H2O = a 5'-end phospho-adenosine-phospho-ribonucleoside in mRNA + (R)-4'-phosphopantetheine + 2 H(+). Functionally, fatty acyl-coenzyme A (CoA) diphosphatase that hydrolyzes fatty acyl-CoA to yield acyl-4'-phosphopantetheine and adenosine 3',5'-bisphosphate. Mediates the hydrolysis of a wide range of CoA esters, including choloyl-CoA and branched-chain fatty-acyl-CoA esters and at low substrate concentrations medium and long-chain fatty-acyl-CoA esters are the primary substrates. Highest activity seen with medium-chain acyl-CoA esters and higher rates of activity seen with the unsaturated acyl-CoA esters compared with the saturated esters. Exhibits decapping activity towards dpCoA-capped RNAs in vitro. The chain is Acyl-coenzyme A diphosphatase NUDT19 (NUDT19) from Homo sapiens (Human).